Reading from the N-terminus, the 172-residue chain is uncharacterized protein (172 aa).

This is an uncharacterized protein from Orgyia pseudotsugata (Douglas-fir tussock moth).